We begin with the raw amino-acid sequence, 506 residues long: UBX domain-containing protein 4 (506 aa).

The interaction with UBQLN1 stretch occupies residues 1-199 (MLWFQGAIPA…PAEDLTVRVE (199 aa)). The Cytoplasmic segment spans residues 1-411 (MLWFQGAIPA…VPSSSGDIWT (411 aa)). 2 stretches are compositionally biased toward polar residues: residues 114-136 (SLKG…TPSA) and 177-189 (SLSQ…SNQR). The interval 114–193 (SLKGETSVTN…GCSNQRPAED (80 aa)) is disordered. In terms of domain architecture, UBX spans 313 to 391 (DRSTIARIQF…ELAPSASVVL (79 aa)). An intramembrane segment occupies 412–432 (LLGTVLYPFLAIWRLISNFLF). Over 433–506 (SNPPPAQTSA…TWNGNSTQQM (74 aa)) the chain is Cytoplasmic. The disordered stretch occupies residues 437–506 (PAQTSARATS…TWNGNSTQQM (70 aa)). Over residues 444-456 (ATSTEPSNSASSS) the composition is skewed to low complexity. A compositionally biased stretch (basic and acidic residues) spans 457–489 (KSEKREPVRKRVLEKRGEDFKKEGKIYRLRTQD). Position 487 is a phosphothreonine (threonine 487). Over residues 496–506 (NTWNGNSTQQM) the composition is skewed to polar residues.

As to quaternary structure, directly interacts with VCP. Interacts with UBQLN1. Forms a complex with VCP and UBQLN1.

The protein localises to the endoplasmic reticulum membrane. Its subcellular location is the nucleus envelope. Its function is as follows. Involved in endoplasmic reticulum-associated protein degradation (ERAD). Acts as a platform to recruit both UBQLN1 and VCP to the ER during ERAD. This is UBX domain-containing protein 4 (Ubxn4) from Rattus norvegicus (Rat).